The primary structure comprises 127 residues: MAQSVPPGDIQTQPGTKIVFNAPYDDKHTYHIKVINSSARRIGYGIKTTNMKRLGVDPPCGVLDPKEAVLLAVSCDAFAFGQEDTNNDRITIEWTNTPDGAAKQFRREWFQGDGMVRRKNLPIEYNP.

Ala-2 carries the N-acetylalanine modification. The 118-residue stretch at 9–126 (DIQTQPGTKI…RRKNLPIEYN (118 aa)) folds into the MSP domain.

As to expression, sperm.

It localises to the cell projection. It is found in the pseudopodium. The protein resides in the cytoplasm. The protein localises to the cytoskeleton. Central component in molecular interactions underlying sperm crawling. Forms an extensive filament system that extends from sperm villipoda, along the leading edge of the pseudopod. This is Major sperm protein 78 (msp-78) from Caenorhabditis elegans.